Here is a 759-residue protein sequence, read N- to C-terminus: MSLSEPDHELVVAELGREPTAAEVALFENLWSEHCAYRSSRPLLSAFESEGDQVVVGPGDDAAVLALPEPDAADTPAAERDADDYGDQYVTFGVESHNHPSFVDPVDGAATGVGGIVRDTMSMGAYPIALLDSLYFGGFDRERSRYLFEGVVEGISHYGNCIGVPTVGGSVAFHDGYEGNPLVNVACVGLTNEDRLVTATAQEPGNTLMLVGNGTGRDGLGGASFASEDLAEDAETEDRPAVQVGDPYAEKRLIECNEALVDEDLVLSARDLGAAGLGGASSELVAKGGLGARLDLDSVHQREPNMNAMEILLAESQERMCYEVAPEDVARVEALAERFDLGCSVIGEVTDGNYVCEFAGAGKGEDDADDSDAESEVVVDVDAEYLADGAPMNDLASESPTQPDRDLPDPEPSLDEAVESVVSAPSTASKRWVYRQYDHEVGVRTAMKPGDDAAIMAIRETASTDAADLAPADQGVGLALSSGANPNWTETDPYEGARAVALENATNLAAKGAVPLAAVDCLNGGNPEKPEVYGGFKGIVDGLADACADLDAPVVGGNVSLYNDSVEGPIPPTPTLALIGTRKGYNAPPAALDADSAGDSELLLIGAGGADGGALGGSEYLAQAGGTDRFPTLPDTETKSLADRVASLAAVARHESTFATHDVSDGGLAVALAELVTDAAGADVTLPDRVAVFEETPGRLVVQTTDPEAVAELAGELPVLRLGEVTTDGALSLSVGDDETAFDADTIRELRGVIDRELA.

Residue His-34 is part of the active site. ATP is bound at residue Tyr-37. Glu-95 contacts Mg(2+). Residues 96–99 (SHNH) and Arg-118 each bind substrate. His-97 acts as the Proton acceptor in catalysis. Asp-119 lines the Mg(2+) pocket. Gln-243 serves as a coordination point for substrate. Asp-271 contacts Mg(2+). 315–317 (ESQ) serves as a coordination point for substrate. Positions 388–422 (DGAPMNDLASESPTQPDRDLPDPEPSLDEAVESVV) are disordered. Asp-520 and Gly-557 together coordinate ATP. Asn-558 serves as a coordination point for Mg(2+). Ser-560 is a substrate binding site.

It belongs to the FGAMS family. In terms of assembly, monomer. Part of the FGAM synthase complex composed of 1 PurL, 1 PurQ and 2 PurS subunits.

The protein localises to the cytoplasm. It catalyses the reaction N(2)-formyl-N(1)-(5-phospho-beta-D-ribosyl)glycinamide + L-glutamine + ATP + H2O = 2-formamido-N(1)-(5-O-phospho-beta-D-ribosyl)acetamidine + L-glutamate + ADP + phosphate + H(+). The protein operates within purine metabolism; IMP biosynthesis via de novo pathway; 5-amino-1-(5-phospho-D-ribosyl)imidazole from N(2)-formyl-N(1)-(5-phospho-D-ribosyl)glycinamide: step 1/2. Part of the phosphoribosylformylglycinamidine synthase complex involved in the purines biosynthetic pathway. Catalyzes the ATP-dependent conversion of formylglycinamide ribonucleotide (FGAR) and glutamine to yield formylglycinamidine ribonucleotide (FGAM) and glutamate. The FGAM synthase complex is composed of three subunits. PurQ produces an ammonia molecule by converting glutamine to glutamate. PurL transfers the ammonia molecule to FGAR to form FGAM in an ATP-dependent manner. PurS interacts with PurQ and PurL and is thought to assist in the transfer of the ammonia molecule from PurQ to PurL. This Halorubrum lacusprofundi (strain ATCC 49239 / DSM 5036 / JCM 8891 / ACAM 34) protein is Phosphoribosylformylglycinamidine synthase subunit PurL.